The following is a 156-amino-acid chain: Ribonuclease pancreatic (156 aa).

The N-terminal stretch at 1-28 (MALEKSLVLLPLLVLILLVLGWVQPSLG) is a signal peptide. The segment covering 33-43 (AKKFQRQHMDS) has biased composition (basic and acidic residues). Positions 33-52 (AKKFQRQHMDSDSSPSSNST) are disordered. Residues Lys-35 and Arg-38 each contribute to the substrate site. His-40 functions as the Proton acceptor in the catalytic mechanism. Asn-50 and Asn-62 each carry an N-linked (GlcNAc...) asparagine glycan. Cystine bridges form between Cys-54–Cys-112, Cys-68–Cys-123, Cys-86–Cys-138, and Cys-93–Cys-100. Substrate-binding positions include 69-73 (KPVNT) and Lys-94. The N-linked (GlcNAc...) asparagine glycan is linked to Asn-104. Arg-113 contacts substrate. Residue Asn-116 is glycosylated (N-linked (GlcNAc...) asparagine). His-147 functions as the Proton donor in the catalytic mechanism.

This sequence belongs to the pancreatic ribonuclease family. Monomer. Interacts with and forms tight 1:1 complexes with RNH1. Dimerization of two such complexes may occur. Interaction with RNH1 inhibits this protein.

The protein resides in the secreted. The catalysed reaction is an [RNA] containing cytidine + H2O = an [RNA]-3'-cytidine-3'-phosphate + a 5'-hydroxy-ribonucleotide-3'-[RNA].. The enzyme catalyses an [RNA] containing uridine + H2O = an [RNA]-3'-uridine-3'-phosphate + a 5'-hydroxy-ribonucleotide-3'-[RNA].. Functionally, endonuclease that catalyzes the cleavage of RNA on the 3' side of pyrimidine nucleotides. Acts on single-stranded and double-stranded RNA. The protein is Ribonuclease pancreatic (RNASE1) of Gorilla gorilla gorilla (Western lowland gorilla).